Here is a 577-residue protein sequence, read N- to C-terminus: Hemagglutinin-neuraminidase (577 aa).

Residues 1 to 22 (MDRAVSQVALENDEREAKNTWR) lie on the Intravirion side of the membrane. A helical transmembrane segment spans residues 23 to 45 (LIFRIAILLLTVVTLATSVASLV). The Virion surface portion of the chain corresponds to 46–571 (YSMGASTPSD…LVEILKNDGV (526 aa)). Residues Asn-119 and Asn-144 are each glycosylated (N-linked (GlcNAc...) asparagine; by host). An important for interaction with fusion/F protein region spans residues 124–152 (GAPIHDPDFIGGIGKELIVDNASDVTSFY). 3 disulfide bridges follow: Cys-172–Cys-196, Cys-186–Cys-247, and Cys-238–Cys-251. Residues 234–239 (NRKSCS) form an involved in neuraminidase activity region. Residues Asn-341 and Asn-433 are each glycosylated (N-linked (GlcNAc...) asparagine; by host). 2 disulfides stabilise this stretch: Cys-344/Cys-461 and Cys-455/Cys-465. N-linked (GlcNAc...) asparagine; by host glycans are attached at residues Asn-481 and Asn-538. A disulfide bridge links Cys-531 with Cys-542.

It belongs to the paramyxoviruses hemagglutinin-neuraminidase family. In terms of assembly, homotetramer; composed of disulfide-linked homodimers. Interacts with F protein trimer. Interacts with host CG-1B; this interaction inhibits viral adsorption and replication rather than internalization.

It localises to the virion membrane. It is found in the host cell membrane. The catalysed reaction is Hydrolysis of alpha-(2-&gt;3)-, alpha-(2-&gt;6)-, alpha-(2-&gt;8)- glycosidic linkages of terminal sialic acid residues in oligosaccharides, glycoproteins, glycolipids, colominic acid and synthetic substrates.. In terms of biological role, mediates the viral entry into the host cell together with fusion/F protein. Attaches the virus to sialic acid-containing cell receptors and thereby initiates infection. Binding of HN protein to the receptor induces a conformational change that allows the F protein to trigger virion/cell membranes fusion. Its function is as follows. Neuraminidase activity ensures the efficient spread of the virus by dissociating the mature virions from the neuraminic acid containing glycoproteins. The chain is Hemagglutinin-neuraminidase (HN) from Gallus gallus (Chicken).